Here is a 265-residue protein sequence, read N- to C-terminus: Eukaryotic translation initiation factor 3 subunit J (265 aa).

Residues 1-71 form a disordered region; sequence MSWDDEAING…KESSADRALL (71 aa). Over residues 23-32 the composition is skewed to acidic residues; the sequence is WDAEIGDDEP. Residues 42-71 are compositionally biased toward basic and acidic residues; it reads EEKKPAPKPKKEQPKKVKKGKESSADRALL. Ser65 is modified (phosphoserine). Thr75 carries the phosphothreonine modification. Phosphoserine is present on Ser92. Positions 219–265 are disordered; sequence VRGGTATGGAGKKKVKGKTNLGGAFKKDQDFDLDGPDDFEFGDDDFM. Arg220 carries the omega-N-methylarginine modification. Over residues 249–265 the composition is skewed to acidic residues; that stretch reads FDLDGPDDFEFGDDDFM.

Belongs to the eIF-3 subunit J family. In terms of assembly, probable component of the eukaryotic translation initiation factor 3 (eIF-3) complex. Is not part of the eIF-3 core complex, with which it is associated in substochiometric amounts.

The protein localises to the cytoplasm. In terms of biological role, component of the eukaryotic translation initiation factor 3 (eIF-3) complex, which is involved in protein synthesis of a specialized repertoire of mRNAs and, together with other initiation factors, stimulates binding of mRNA and methionyl-tRNAi to the 40S ribosome. The eIF-3 complex specifically targets and initiates translation of a subset of mRNAs involved in cell proliferation. The polypeptide is Eukaryotic translation initiation factor 3 subunit J (Saccharomyces cerevisiae (strain ATCC 204508 / S288c) (Baker's yeast)).